Reading from the N-terminus, the 67-residue chain is Protein DsrB (67 aa).

The protein belongs to the DsrB family.

The chain is Protein DsrB from Pectobacterium carotovorum subsp. carotovorum (strain PC1).